A 426-amino-acid polypeptide reads, in one-letter code: Glutamate-1-semialdehyde 2,1-aminomutase (426 aa).

Position 265 is an N6-(pyridoxal phosphate)lysine (Lys-265).

It belongs to the class-III pyridoxal-phosphate-dependent aminotransferase family. HemL subfamily. Homodimer. Pyridoxal 5'-phosphate is required as a cofactor.

It localises to the cytoplasm. It catalyses the reaction (S)-4-amino-5-oxopentanoate = 5-aminolevulinate. Its pathway is porphyrin-containing compound metabolism; protoporphyrin-IX biosynthesis; 5-aminolevulinate from L-glutamyl-tRNA(Glu): step 2/2. This is Glutamate-1-semialdehyde 2,1-aminomutase from Salmonella newport (strain SL254).